A 440-amino-acid polypeptide reads, in one-letter code: MRLSRYFMPILKENPKEAEIVSHRLMLRAGMIRQQSQGIYSWLPLGKRVLDKVNAIIREEQNRAGAIELSMPTLQSAELWQESGRYDAYGKEMLRIKDRQDRPMLYGPTNEEMVTDIFRSSVKSYKDLPLNLYHIQLKFRDEIRPRFGTMRSREFMMKDAYSFDLTREGAEHSYNKMFAAYLRTFERLGLRAIPMRADTGPIGGNLSHEFIILADTGESEVFCHKDFVGFDIPGENTDFDSVEGLKAIFDKWTSLYAATSEMHDEAAFNAVPEGDRLSARGIEVGHIFYFGTKYSEPMGAKVQGPDGKEHFVHMGSYGIGPTRLVPAIIEASHDDNGIIWPASVAPFDVVVINMKVGDQACDDTCELIYAALKKAGKDVLYDDTDDRAGTKFATADLIGVPVQIIAGPRAVANGEVEVKDRKTGARETMTIEAAINRFVA.

This sequence belongs to the class-II aminoacyl-tRNA synthetase family. ProS type 2 subfamily. Homodimer.

The protein localises to the cytoplasm. It carries out the reaction tRNA(Pro) + L-proline + ATP = L-prolyl-tRNA(Pro) + AMP + diphosphate. Functionally, catalyzes the attachment of proline to tRNA(Pro) in a two-step reaction: proline is first activated by ATP to form Pro-AMP and then transferred to the acceptor end of tRNA(Pro). The polypeptide is Proline--tRNA ligase (Rhizobium etli (strain ATCC 51251 / DSM 11541 / JCM 21823 / NBRC 15573 / CFN 42)).